The chain runs to 197 residues: ATP-dependent Clp protease proteolytic subunit (197 aa).

S98 acts as the Nucleophile in catalysis. Residue H123 is part of the active site.

The protein belongs to the peptidase S14 family. In terms of assembly, fourteen ClpP subunits assemble into 2 heptameric rings which stack back to back to give a disk-like structure with a central cavity, resembling the structure of eukaryotic proteasomes.

The protein resides in the cytoplasm. It catalyses the reaction Hydrolysis of proteins to small peptides in the presence of ATP and magnesium. alpha-casein is the usual test substrate. In the absence of ATP, only oligopeptides shorter than five residues are hydrolyzed (such as succinyl-Leu-Tyr-|-NHMec, and Leu-Tyr-Leu-|-Tyr-Trp, in which cleavage of the -Tyr-|-Leu- and -Tyr-|-Trp bonds also occurs).. Cleaves peptides in various proteins in a process that requires ATP hydrolysis. Has a chymotrypsin-like activity. Plays a major role in the degradation of misfolded proteins. In Pediococcus pentosaceus (strain ATCC 25745 / CCUG 21536 / LMG 10740 / 183-1w), this protein is ATP-dependent Clp protease proteolytic subunit.